The chain runs to 451 residues: Serine--tRNA ligase (451 aa).

258–260 (TSE) serves as a coordination point for L-serine. Position 289–291 (289–291 (RSE)) interacts with ATP. Glu-312 contacts L-serine. 376 to 379 (EISS) lines the ATP pocket. Ser-411 contributes to the L-serine binding site.

This sequence belongs to the class-II aminoacyl-tRNA synthetase family. Type-1 seryl-tRNA synthetase subfamily. In terms of assembly, homodimer. The tRNA molecule binds across the dimer.

The protein resides in the cytoplasm. The catalysed reaction is tRNA(Ser) + L-serine + ATP = L-seryl-tRNA(Ser) + AMP + diphosphate + H(+). It carries out the reaction tRNA(Sec) + L-serine + ATP = L-seryl-tRNA(Sec) + AMP + diphosphate + H(+). It functions in the pathway aminoacyl-tRNA biosynthesis; selenocysteinyl-tRNA(Sec) biosynthesis; L-seryl-tRNA(Sec) from L-serine and tRNA(Sec): step 1/1. In terms of biological role, catalyzes the attachment of serine to tRNA(Ser). Is also able to aminoacylate tRNA(Sec) with serine, to form the misacylated tRNA L-seryl-tRNA(Sec), which will be further converted into selenocysteinyl-tRNA(Sec). The sequence is that of Serine--tRNA ligase from Bordetella bronchiseptica (strain ATCC BAA-588 / NCTC 13252 / RB50) (Alcaligenes bronchisepticus).